Here is a 490-residue protein sequence, read N- to C-terminus: Ribulose bisphosphate carboxylase large chain (490 aa).

Substrate is bound by residues N127 and T177. K179 functions as the Proton acceptor in the catalytic mechanism. Substrate is bound at residue K181. The Mg(2+) site is built by K205, D207, and E208. K205 carries the N6-carboxylysine modification. The Proton acceptor role is filled by H297. The substrate site is built by R298, H330, and S382.

Belongs to the RuBisCO large chain family. Type I subfamily. In terms of assembly, heterohexadecamer of 8 large chains and 8 small chains. Mg(2+) is required as a cofactor.

It localises to the plastid. Its subcellular location is the chloroplast. The catalysed reaction is 2 (2R)-3-phosphoglycerate + 2 H(+) = D-ribulose 1,5-bisphosphate + CO2 + H2O. It carries out the reaction D-ribulose 1,5-bisphosphate + O2 = 2-phosphoglycolate + (2R)-3-phosphoglycerate + 2 H(+). In terms of biological role, ruBisCO catalyzes two reactions: the carboxylation of D-ribulose 1,5-bisphosphate, the primary event in carbon dioxide fixation, as well as the oxidative fragmentation of the pentose substrate in the photorespiration process. Both reactions occur simultaneously and in competition at the same active site. This is Ribulose bisphosphate carboxylase large chain from Thalassiosira pseudonana (Marine diatom).